The primary structure comprises 211 residues: Cytidylate kinase (211 aa).

9 to 17 is an ATP binding site; it reads GPAAAGKGT.

It belongs to the cytidylate kinase family. Type 1 subfamily.

It is found in the cytoplasm. It catalyses the reaction CMP + ATP = CDP + ADP. The enzyme catalyses dCMP + ATP = dCDP + ADP. The protein is Cytidylate kinase of Paramagnetospirillum magneticum (strain ATCC 700264 / AMB-1) (Magnetospirillum magneticum).